A 353-amino-acid polypeptide reads, in one-letter code: Photosystem II protein D1 (353 aa).

N-acetylthreonine is present on Thr-2. Thr-2 bears the Phosphothreonine mark. 3 helical membrane-spanning segments follow: residues 29 to 46 (YIGWFGVLMIPTLLTATS), 118 to 133 (HFLLGVACYMGREWEL), and 142 to 156 (WIAVAYSAPVAAATA). A chlorophyll a-binding site is contributed by His-118. Tyr-126 lines the pheophytin a pocket. 2 residues coordinate [CaMn4O5] cluster: Asp-170 and Glu-189. The chain crosses the membrane as a helical span at residues 197-218 (FHMLGVAGVFGGSLFSAMHGSL). His-198 contacts chlorophyll a. A quinone contacts are provided by residues His-215 and 264–265 (SF). Position 215 (His-215) interacts with Fe cation. His-272 serves as a coordination point for Fe cation. A helical membrane pass occupies residues 274–288 (FLAAWPVVGIWFTAL). [CaMn4O5] cluster contacts are provided by His-332, Glu-333, Asp-342, and Ala-344. Positions 345-353 (GVEVPSTNG) are excised as a propeptide.

Belongs to the reaction center PufL/M/PsbA/D family. PSII is composed of 1 copy each of membrane proteins PsbA, PsbB, PsbC, PsbD, PsbE, PsbF, PsbH, PsbI, PsbJ, PsbK, PsbL, PsbM, PsbT, PsbX, PsbY, PsbZ, Psb30/Ycf12, at least 3 peripheral proteins of the oxygen-evolving complex and a large number of cofactors. It forms dimeric complexes. The D1/D2 heterodimer binds P680, chlorophylls that are the primary electron donor of PSII, and subsequent electron acceptors. It shares a non-heme iron and each subunit binds pheophytin, quinone, additional chlorophylls, carotenoids and lipids. D1 provides most of the ligands for the Mn4-Ca-O5 cluster of the oxygen-evolving complex (OEC). There is also a Cl(-1) ion associated with D1 and D2, which is required for oxygen evolution. The PSII complex binds additional chlorophylls, carotenoids and specific lipids. is required as a cofactor. Tyr-161 forms a radical intermediate that is referred to as redox-active TyrZ, YZ or Y-Z. Post-translationally, C-terminally processed by CTPA; processing is essential to allow assembly of the oxygen-evolving complex and thus photosynthetic growth.

It localises to the plastid. The protein resides in the chloroplast thylakoid membrane. It carries out the reaction 2 a plastoquinone + 4 hnu + 2 H2O = 2 a plastoquinol + O2. In terms of biological role, photosystem II (PSII) is a light-driven water:plastoquinone oxidoreductase that uses light energy to abstract electrons from H(2)O, generating O(2) and a proton gradient subsequently used for ATP formation. It consists of a core antenna complex that captures photons, and an electron transfer chain that converts photonic excitation into a charge separation. The D1/D2 (PsbA/PsbD) reaction center heterodimer binds P680, the primary electron donor of PSII as well as several subsequent electron acceptors. The chain is Photosystem II protein D1 from Morus indica (Mulberry).